The primary structure comprises 453 residues: Tubulin delta chain (453 aa).

143 to 149 is a binding site for GTP; sequence AGGTGSG.

The protein belongs to the tubulin family. Found in a complex with TEDC1, TEDC2, TUBE1 and TUBD1.

The protein resides in the nucleus. Its subcellular location is the cytoplasm. It is found in the cytoskeleton. It localises to the microtubule organizing center. The protein localises to the centrosome. The protein resides in the centriole. Its subcellular location is the cell projection. It is found in the cilium. Acts as a positive regulator of hedgehog signaling and regulates ciliary function. The polypeptide is Tubulin delta chain (TUBD1) (Canis lupus familiaris (Dog)).